Here is a 1001-residue protein sequence, read N- to C-terminus: Ribonuclease E/G-like protein, chloroplastic (1001 aa).

The transit peptide at 1–48 directs the protein to the chloroplast; the sequence is MDVTEVPWRRLPQFSVSSRASWLVSSGFPLSSYMFSHVERGKTFRLTL. A CBM20 domain is found at 76 to 185; that stretch reads SRLKGLCEVV…KIIIRDSWMS (110 aa). Asp755 provides a ligand contact to Mg(2+). Residues 769-789 are a coiled coil; it reads QEKAILEVNLAAARQIAREIR. Asp800 is a binding site for Mg(2+). 2 residues coordinate Zn(2+): Cys858 and Cys861.

Belongs to the RNase E/G family. In terms of assembly, part of a chloroplastic degradosome-like complex. Interacts with RHON1. A homotetramer formed by a dimer of dimers. The cofactor is Mg(2+). Requires Zn(2+) as cofactor. In terms of tissue distribution, expressed in cotyledons, rosette and cauline leaves.

Its subcellular location is the plastid. The protein resides in the chloroplast stroma. Its function is as follows. Involved in intercistronic processing of primary transcripts from chloroplast operons. The endonucleolytic activity of the enzyme depends on the number of phosphates at the 5' end, is inhibited by structured RNA, and preferentially cleaves A/U-rich sequences. The chain is Ribonuclease E/G-like protein, chloroplastic (RNE) from Arabidopsis thaliana (Mouse-ear cress).